The following is a 195-amino-acid chain: Holliday junction branch migration complex subunit RuvA (195 aa).

Residues 1–62 are domain I; sequence MIEFVKGPVA…EDQQTLYGFR (62 aa). The domain II stretch occupies residues 63 to 141; sequence SRRERELFNK…ELAPDYVPNE (79 aa). The flexible linker stretch occupies residues 141–145; sequence EGLFA. Positions 146-195 are domain III; it reads QGASELDEACEALVALGYSEREIAKVRKALSGEILTTDAYIKRALQLLLK.

Belongs to the RuvA family. Homotetramer. Forms an RuvA(8)-RuvB(12)-Holliday junction (HJ) complex. HJ DNA is sandwiched between 2 RuvA tetramers; dsDNA enters through RuvA and exits via RuvB. An RuvB hexamer assembles on each DNA strand where it exits the tetramer. Each RuvB hexamer is contacted by two RuvA subunits (via domain III) on 2 adjacent RuvB subunits; this complex drives branch migration. In the full resolvosome a probable DNA-RuvA(4)-RuvB(12)-RuvC(2) complex forms which resolves the HJ.

It is found in the cytoplasm. The RuvA-RuvB-RuvC complex processes Holliday junction (HJ) DNA during genetic recombination and DNA repair, while the RuvA-RuvB complex plays an important role in the rescue of blocked DNA replication forks via replication fork reversal (RFR). RuvA specifically binds to HJ cruciform DNA, conferring on it an open structure. The RuvB hexamer acts as an ATP-dependent pump, pulling dsDNA into and through the RuvAB complex. HJ branch migration allows RuvC to scan DNA until it finds its consensus sequence, where it cleaves and resolves the cruciform DNA. This Exiguobacterium sp. (strain ATCC BAA-1283 / AT1b) protein is Holliday junction branch migration complex subunit RuvA.